Reading from the N-terminus, the 160-residue chain is MIKNKKKKSYTSVYALGQYISMSAHKARRVIDQIRGRSYEEALMILELMPYRGCYPIFKLVYSAAANASHNKGLKETNLVISKAEVNQGNTVKKLKPRARGRSYPIKRSTCHITIVLEDTSLYQQYDEYLMYFKKPGCSNENKNLTCYDTYSSGGLWDKK.

Belongs to the universal ribosomal protein uL22 family. As to quaternary structure, part of the 50S ribosomal subunit.

Its subcellular location is the plastid. The protein localises to the chloroplast. In terms of biological role, this protein binds specifically to 23S rRNA. Functionally, the globular domain of the protein is located near the polypeptide exit tunnel on the outside of the subunit, while an extended beta-hairpin is found that lines the wall of the exit tunnel in the center of the 70S ribosome. This Draba nemorosa (Woodland whitlowgrass) protein is Large ribosomal subunit protein uL22c (rpl22).